A 210-amino-acid polypeptide reads, in one-letter code: MVEKQIAARGIQDPRVLEAMGKVPRERFVSEHIAPLAYEDRPLSIDEGQTISQPFIVAVMAQQAQITPQDKVLEIGTGSGYSAAILSQLASHVYSMERYPKLAELAKKRLQEFGYNNVTVSVGDGSLGWEEFAPYEVIIVTAGGPQIPPSLLKQLAISGRLVIPVGPSLESQQLMRVMREDADHYRYENLGSVQFVPLVGKEGWQTTSSS.

The active site involves serine 52.

It belongs to the methyltransferase superfamily. L-isoaspartyl/D-aspartyl protein methyltransferase family.

It localises to the cytoplasm. It carries out the reaction [protein]-L-isoaspartate + S-adenosyl-L-methionine = [protein]-L-isoaspartate alpha-methyl ester + S-adenosyl-L-homocysteine. Catalyzes the methyl esterification of L-isoaspartyl residues in peptides and proteins that result from spontaneous decomposition of normal L-aspartyl and L-asparaginyl residues. It plays a role in the repair and/or degradation of damaged proteins. This is Protein-L-isoaspartate O-methyltransferase from Protochlamydia amoebophila (strain UWE25).